A 453-amino-acid polypeptide reads, in one-letter code: UPF0210 protein Mbar_A3181 (453 aa).

The protein belongs to the UPF0210 family.

In Methanosarcina barkeri (strain Fusaro / DSM 804), this protein is UPF0210 protein Mbar_A3181.